A 212-amino-acid polypeptide reads, in one-letter code: MTSYSSATARAEMSELRRLKSLLPPELQSWVMVEGSTEVNPPLIRSEELGRDEIEIQVDLAKWENLAIDQRNLLFWHEVARIQSDTIPREGWEMAALAIGLGGAVGELWVQDGLLLLLALGLCGISGYRLWQKNNGEKRIKEAIEADEKAITLATRFGYTLPNAYKSLGSAFKTLIEQTPNRRQRKQYETRLQALRQSAAKMKAKTQKAKAL.

Residues tryptophan 109–tryptophan 131 form a helical membrane-spanning segment. The stretch at proline 180–leucine 212 forms a coiled coil.

Its subcellular location is the cellular thylakoid membrane. This chain is Thylakoid membrane protein slr1949, found in Synechocystis sp. (strain ATCC 27184 / PCC 6803 / Kazusa).